We begin with the raw amino-acid sequence, 178 residues long: Translation initiation factor IF-3 (178 aa).

The interval 1–20 is disordered; the sequence is MRRPFKAAAPTKDGPRSNRD.

It belongs to the IF-3 family. In terms of assembly, monomer.

The protein resides in the cytoplasm. In terms of biological role, IF-3 binds to the 30S ribosomal subunit and shifts the equilibrium between 70S ribosomes and their 50S and 30S subunits in favor of the free subunits, thus enhancing the availability of 30S subunits on which protein synthesis initiation begins. The sequence is that of Translation initiation factor IF-3 from Mesorhizobium japonicum (strain LMG 29417 / CECT 9101 / MAFF 303099) (Mesorhizobium loti (strain MAFF 303099)).